A 272-amino-acid chain; its full sequence is B3 domain-containing protein Os10g0323000 (272 aa).

The TF-B3 1 DNA-binding region spans 39-132 (RYGENRKHGQ…TLDLLILDKH (94 aa)). The tract at residues 139-171 (PPSKRDLKLKSKRSTHQDSKGHPSNTDPGPSRI) is disordered. Over residues 141 to 159 (SKRDLKLKSKRSTHQDSKG) the composition is skewed to basic and acidic residues. Positions 180–272 (ESSANTQLLV…THLGVIVDIF (93 aa)) form a DNA-binding region, TF-B3 2.

The protein localises to the nucleus. The protein is B3 domain-containing protein Os10g0323000 of Oryza sativa subsp. japonica (Rice).